A 160-amino-acid polypeptide reads, in one-letter code: MTNTKGKRRGTRYMFSRPFRKHGVVPLATYMRIYKKGDIVDIKGMGTVQKGMPHKCYHGKTGRVYNVTQHAVGIIVNKQVKGKILAKRINVRIEHIKHSKSRDSFLKRVKENDQKKKEAKEKGTWVQLNGQPAPPREAHFVRTNGKEPELLEPIPYEFMA.

Composition is skewed to basic and acidic residues over residues 112-123 and 136-146; these read NDQKKKEAKEKG and REAHFVRTNGK. A disordered region spans residues 112 to 146; the sequence is NDQKKKEAKEKGTWVQLNGQPAPPREAHFVRTNGK.

This sequence belongs to the eukaryotic ribosomal protein eL21 family. As to quaternary structure, component of the large ribosomal subunit.

Its subcellular location is the cytoplasm. The protein localises to the cytosol. It is found in the endoplasmic reticulum. In terms of biological role, component of the large ribosomal subunit. The ribosome is a large ribonucleoprotein complex responsible for the synthesis of proteins in the cell. This chain is Large ribosomal subunit protein eL21 (Rpl21), found in Rattus norvegicus (Rat).